The primary structure comprises 308 residues: Elongation factor Ts (308 aa).

Residues 79 to 82 form an involved in Mg(2+) ion dislocation from EF-Tu region; sequence TDFV.

It belongs to the EF-Ts family.

It is found in the cytoplasm. Associates with the EF-Tu.GDP complex and induces the exchange of GDP to GTP. It remains bound to the aminoacyl-tRNA.EF-Tu.GTP complex up to the GTP hydrolysis stage on the ribosome. This Bdellovibrio bacteriovorus (strain ATCC 15356 / DSM 50701 / NCIMB 9529 / HD100) protein is Elongation factor Ts.